Reading from the N-terminus, the 93-residue chain is UPF0728 protein C10orf53 homolog (93 aa).

This sequence belongs to the UPF0728 family.

The polypeptide is UPF0728 protein C10orf53 homolog (Xenopus tropicalis (Western clawed frog)).